Consider the following 398-residue polypeptide: Small ribosomal subunit protein uS3m (398 aa).

The protein belongs to the universal ribosomal protein uS3 family. Component of the mitochondrial small ribosomal subunit (mt-SSU). Mature yeast 74S mitochondrial ribosomes consist of a small (37S) and a large (54S) subunit. The 37S small subunit contains a 15S ribosomal RNA (15S mt-rRNA) and 34 different proteins. The 54S large subunit contains a 21S rRNA (21S mt-rRNA) and 46 different proteins. uS3m, uS4m and uS5m form the narrow entry site of the mRNA channel.

It localises to the mitochondrion. Component of the mitochondrial ribosome (mitoribosome), a dedicated translation machinery responsible for the synthesis of mitochondrial genome-encoded proteins, including at least some of the essential transmembrane subunits of the mitochondrial respiratory chain. The mitoribosomes are attached to the mitochondrial inner membrane and translation products are cotranslationally integrated into the membrane. uS3m is essential for mitochondrial protein synthesis and required for the maturation of small ribosomal subunits. The chain is Small ribosomal subunit protein uS3m (VAR1) from Saccharomyces cerevisiae (strain ATCC 204508 / S288c) (Baker's yeast).